A 368-amino-acid chain; its full sequence is Uroporphyrinogen decarboxylase (368 aa).

Residues 41–45 (RQAGR), Asp-91, Tyr-168, Ser-223, and His-345 contribute to the substrate site.

It belongs to the uroporphyrinogen decarboxylase family. Homodimer.

The protein localises to the cytoplasm. It carries out the reaction uroporphyrinogen III + 4 H(+) = coproporphyrinogen III + 4 CO2. It functions in the pathway porphyrin-containing compound metabolism; protoporphyrin-IX biosynthesis; coproporphyrinogen-III from 5-aminolevulinate: step 4/4. In terms of biological role, catalyzes the decarboxylation of four acetate groups of uroporphyrinogen-III to yield coproporphyrinogen-III. The chain is Uroporphyrinogen decarboxylase from Psychrobacter sp. (strain PRwf-1).